The following is a 246-amino-acid chain: Uridylate kinase (246 aa).

18–21 (KVSG) is an ATP binding site. G60 provides a ligand contact to UMP. 2 residues coordinate ATP: G61 and R65. UMP contacts are provided by residues D80 and 141–148 (TGNPFFTT). Positions 168, 169, 174, and 177 each coordinate ATP.

Belongs to the UMP kinase family. In terms of assembly, homohexamer.

Its subcellular location is the cytoplasm. The enzyme catalyses UMP + ATP = UDP + ADP. Its pathway is pyrimidine metabolism; CTP biosynthesis via de novo pathway; UDP from UMP (UMPK route): step 1/1. Its activity is regulated as follows. Inhibited by UTP. Its function is as follows. Catalyzes the reversible phosphorylation of UMP to UDP. This chain is Uridylate kinase, found in Gluconobacter oxydans (strain 621H) (Gluconobacter suboxydans).